The following is a 135-amino-acid chain: Ribosome-binding factor A (135 aa).

Belongs to the RbfA family. In terms of assembly, monomer. Binds 30S ribosomal subunits, but not 50S ribosomal subunits or 70S ribosomes.

Its subcellular location is the cytoplasm. Its function is as follows. One of several proteins that assist in the late maturation steps of the functional core of the 30S ribosomal subunit. Associates with free 30S ribosomal subunits (but not with 30S subunits that are part of 70S ribosomes or polysomes). Required for efficient processing of 16S rRNA. May interact with the 5'-terminal helix region of 16S rRNA. The polypeptide is Ribosome-binding factor A (Aliivibrio salmonicida (strain LFI1238) (Vibrio salmonicida (strain LFI1238))).